Consider the following 217-residue polypeptide: Elongation factor Ts (217 aa).

The interval 82–85 (TDFV) is involved in Mg(2+) ion dislocation from EF-Tu.

It belongs to the EF-Ts family.

The protein localises to the cytoplasm. Functionally, associates with the EF-Tu.GDP complex and induces the exchange of GDP to GTP. It remains bound to the aminoacyl-tRNA.EF-Tu.GTP complex up to the GTP hydrolysis stage on the ribosome. The sequence is that of Elongation factor Ts from Synechococcus sp. (strain RCC307).